The sequence spans 373 residues: tRNA-specific 2-thiouridylase MnmA (373 aa).

ATP-binding positions include 12-19 (GMSGGVDS) and methionine 38. An interaction with target base in tRNA region spans residues 98 to 100 (NPD). Cysteine 103 (nucleophile) is an active-site residue. The cysteines at positions 103 and 200 are disulfide-linked. An ATP-binding site is contributed by glycine 127. The tract at residues 150–152 (KDQ) is interaction with tRNA. Cysteine 200 (cysteine persulfide intermediate) is an active-site residue. Residues 312-313 (RY) form an interaction with tRNA region.

The protein belongs to the MnmA/TRMU family.

It localises to the cytoplasm. It catalyses the reaction S-sulfanyl-L-cysteinyl-[protein] + uridine(34) in tRNA + AH2 + ATP = 2-thiouridine(34) in tRNA + L-cysteinyl-[protein] + A + AMP + diphosphate + H(+). Its function is as follows. Catalyzes the 2-thiolation of uridine at the wobble position (U34) of tRNA, leading to the formation of s(2)U34. The protein is tRNA-specific 2-thiouridylase MnmA of Streptococcus pyogenes serotype M49 (strain NZ131).